The primary structure comprises 456 residues: MSSQIKQVFARQILDSRGNPTVEVDVVLESGAFGRAAVPSGASTGIREALELRDGNKALFLGKSVYKAVENVNTKIAQAVKGLDALDQRLIDKTMIELDGSENKKNLGANAILGVSLATARAAASHLRKPFYRYLMDVKEYLMPVPMMNVINGGSHADNNVDMQEFMIVPAGFDTFSEALRCGTEVFHTLKKVLIADGYSVAGVGDEGGYAPDLPSNEAAIEAILKAVKEAGYEPGKHVFIALDPASSEFYKDGKYELKSENKSLTSEEMIDYYAAWVEKYPIVSIEDGLAEEDWAGWKLLTEKLGNKVQLVGDDLFVTNPSILAKGIEKGIANSILIKLNQIGTLTETFEAMAMAGQAGYTCVVSHRSGETSDTIIADLAVATCSGQIKTGSLSRSDRIAKYNQLLRIEEELGENAIYPGIKAFVFNSDEEVEEDVQEIIVEDSEAEKVVVQVEE.

Residue Gln164 participates in (2R)-2-phosphoglycerate binding. Glu207 (proton donor) is an active-site residue. 3 residues coordinate Mg(2+): Asp244, Glu287, and Asp314. Positions 339, 368, 369, and 390 each coordinate (2R)-2-phosphoglycerate. Lys339 serves as the catalytic Proton acceptor.

This sequence belongs to the enolase family. As to quaternary structure, component of the RNA degradosome, a multiprotein complex involved in RNA processing and mRNA degradation. Requires Mg(2+) as cofactor.

The protein localises to the cytoplasm. It localises to the secreted. The protein resides in the cell surface. The catalysed reaction is (2R)-2-phosphoglycerate = phosphoenolpyruvate + H2O. Its pathway is carbohydrate degradation; glycolysis; pyruvate from D-glyceraldehyde 3-phosphate: step 4/5. Functionally, catalyzes the reversible conversion of 2-phosphoglycerate (2-PG) into phosphoenolpyruvate (PEP). It is essential for the degradation of carbohydrates via glycolysis. The polypeptide is Enolase (Francisella tularensis subsp. novicida (strain U112)).